Here is a 173-residue protein sequence, read N- to C-terminus: Cell division protein SepF (173 aa).

The disordered stretch occupies residues 17–85 (SDDEYISDET…NELRTITTVH (69 aa)). Residues 35-52 (SAGGSSAAVSESGSTSVA) show a composition bias toward low complexity.

Belongs to the SepF family. As to quaternary structure, homodimer. Interacts with FtsZ.

The protein resides in the cytoplasm. In terms of biological role, cell division protein that is part of the divisome complex and is recruited early to the Z-ring. Probably stimulates Z-ring formation, perhaps through the cross-linking of FtsZ protofilaments. Its function overlaps with FtsA. In Kocuria rhizophila (strain ATCC 9341 / DSM 348 / NBRC 103217 / DC2201), this protein is Cell division protein SepF.